The chain runs to 371 residues: Putative HAD-like hydrolase Noc_2718 (371 aa).

The segment at 1–288 is HAD-like hydrolase; that stretch reads MKQKILLCSD…TGREESAEEE (288 aa). A YcgL domain is found at 291–371; it reads QSCAIYRSCK…QLSSREYRRS (81 aa).

The protein in the N-terminal section; belongs to the HAD-like hydrolase superfamily.

This Nitrosococcus oceani (strain ATCC 19707 / BCRC 17464 / JCM 30415 / NCIMB 11848 / C-107) protein is Putative HAD-like hydrolase Noc_2718.